Consider the following 355-residue polypeptide: tRNA (guanine-N(1)-)-methyltransferase (355 aa).

Residues glycine 109 and 129 to 134 contribute to the S-adenosyl-L-methionine site; that span reads IGDYVL.

It belongs to the RNA methyltransferase TrmD family. As to quaternary structure, homodimer.

It is found in the cytoplasm. The catalysed reaction is guanosine(37) in tRNA + S-adenosyl-L-methionine = N(1)-methylguanosine(37) in tRNA + S-adenosyl-L-homocysteine + H(+). In terms of biological role, specifically methylates guanosine-37 in various tRNAs. This Chlamydia caviae (strain ATCC VR-813 / DSM 19441 / 03DC25 / GPIC) (Chlamydophila caviae) protein is tRNA (guanine-N(1)-)-methyltransferase.